The primary structure comprises 444 residues: Glutamate-1-semialdehyde 2,1-aminomutase (444 aa).

Position 267 is an N6-(pyridoxal phosphate)lysine (Lys267).

This sequence belongs to the class-III pyridoxal-phosphate-dependent aminotransferase family. HemL subfamily. Homodimer. Pyridoxal 5'-phosphate is required as a cofactor.

It is found in the cytoplasm. It catalyses the reaction (S)-4-amino-5-oxopentanoate = 5-aminolevulinate. Its pathway is porphyrin-containing compound metabolism; protoporphyrin-IX biosynthesis; 5-aminolevulinate from L-glutamyl-tRNA(Glu): step 2/2. The polypeptide is Glutamate-1-semialdehyde 2,1-aminomutase (Xylella fastidiosa (strain M12)).